The primary structure comprises 502 residues: UPF0371 protein CLM_0396 (502 aa).

Belongs to the UPF0371 family.

This chain is UPF0371 protein CLM_0396, found in Clostridium botulinum (strain Kyoto / Type A2).